The sequence spans 485 residues: MEFLGTTQTASYCGPKKCCGLTSLPAVQAPVIQECYQPYYLPGYRYLNSWRPSLFYKIANVQTCPDESTSTLRPPTILPTLRSALFSRYSPHDWDQSNQLQVRGAEASRLWASRLTDDSMRLLQDKDQLTHQMQEGTCRNLGQRLSDIGFWKSELSYELDRLLTENQNLETVKRRLECAANEVNCPLQVALECLYHREKRIGIDLVHDNVEKNLIREVDLLKCCQEQMRKLAQRIDIQMRDNRDAQHVLERDLEDKSSAQCIDEKCFNLRNTSDCISFFHGMEKIDGTISVPETWAKFSNDNIKHSQNMRANSIQLREEAEHLFETLSDQMWRQFTDTNLAFNARISEVTDVKNKLQTQLAKTLQEIFQAENTIMLLERSIMAKEGPLKVAQTRLECRTRRPNMELCRDIPQLKLVNEVFTIDDTLQTLKLRLRETQDTLQLLVMTKCRLEHELAIKANTLCIDKEKCMGMRKTFPCTPRLVGHT.

4 coiled-coil regions span residues 114–185 (RLTD…EVNC), 225–247 (QEQM…DAQH), 307–385 (QNMR…MAKE), and 421–444 (TIDD…QLLV).

The protein belongs to the tektin family. As to quaternary structure, microtubule inner protein component of sperm flagellar doublet microtubules. Interacts with TEKT3. In terms of processing, ubiquitinated, leading to its degradation. Deubiquitinated by USP16, promoting its stability.

The protein localises to the cytoplasm. Its subcellular location is the cytoskeleton. The protein resides in the flagellum axoneme. Its function is as follows. Sperm-specific microtubule inner protein (MIP) part of the dynein-decorated doublet microtubules (DMTs) in flagellar axoneme. Forms an extensive interaction network in different conformations that reinforces the helix bundle composed by other tektin proteins (TEKT1 to TEKT4) and MIPs to anchor the tektin bundle onto the tubulin wall of A-tubule of the sperm flagellum. This is Tektin-5 (TEKT5) from Homo sapiens (Human).